Reading from the N-terminus, the 75-residue chain is UPF0352 protein YejL (75 aa).

Belongs to the UPF0352 family.

The chain is UPF0352 protein YejL from Salmonella agona (strain SL483).